Consider the following 950-residue polypeptide: Protocadherin alpha-1 (950 aa).

An N-terminal signal peptide occupies residues 1 to 29; the sequence is MVFSRRGGLGARDLLLWLLLLAAWEVGSG. Cadherin domains are found at residues 30-133, 157-242, 243-350, 351-455, 456-565, and 588-678; these read QLHY…PPVF, AADA…APLF, DQAV…APEL, AVTS…APAF, AQPE…APAL, and GHVV…APKA. The Extracellular portion of the chain corresponds to 30-697; that stretch reads QLHYSIPEEA…GPEAALVDVN (668 aa). 2 N-linked (GlcNAc...) asparagine glycosylation sites follow: asparagine 257 and asparagine 265. A glycan (N-linked (GlcNAc...) asparagine) is linked at asparagine 548. A helical membrane pass occupies residues 698-718; sequence VYLIIAICAVSSLLVLTLLLY. The Cytoplasmic segment spans residues 719–950; that stretch reads TALRCSVPPT…GNSTTDNSDQ (232 aa). PXXP repeat units follow at residues 734–737, 799–802, 832–835, 873–876, and 891–894; these read PGKP, PRQP, PGGP, PGNP, and PGSP. The segment at 734-894 is 5 X 4 AA repeats of P-X-X-P; it reads PGKPTLVCSS…PDKFIIPGSP (161 aa). Disordered stretches follow at residues 752–808, 828–856, and 871–890; these read QQRR…DWRY, LRAG…EVSP, and YGPG…KFII. Residues 900–950 form a disordered region; it reads RQEPTNSQIDKSDFITFGKKEETKKKKKKKKGNKTQEKKEKGNSTTDNSDQ. Residues 909 to 923 show a composition bias toward basic and acidic residues; sequence DKSDFITFGKKEETK.

The protein localises to the cell membrane. It localises to the secreted. Potential calcium-dependent cell-adhesion protein. May be involved in the establishment and maintenance of specific neuronal connections in the brain. This Homo sapiens (Human) protein is Protocadherin alpha-1 (PCDHA1).